The following is a 525-amino-acid chain: MSQQVIIFDTTLRDGEQALQASLSVKEKLQVAQALERMGVDVMEVGFPVSSPGDFESVQTIARQIKNSRVCGLARCVDRDIDVAAEALRVAEAFRIHLFLATSTLHVESKLKKSFDQVVEMAVHSVKRARNYTDDVEFSCEDAGRTPIDNLCRIVEATIKAGARTINIPDTVGYTTPNQFGGIISSLYQHVPNIDKAIISVHCHDDLGMAVGNSIAAIQSGARQVEGTLNGIGERAGNTALEEVIMAIKVRQDLLNVHTGIHHQEIYRTSQVVSQLCNMPIPANKAVVGANAFAHSSGIHQDGVLKNRQNYEIMTPEIIGLKEVQLNLTSRSGRAAVKHRMQEMGYQESNYSLDELYDAFLKLADKKGQVFDYDLEALAFINNQQEQSEHFRLEYFSVQSSSADIATASVKLAFGDEVHAEAATGNGPVDAVYEALNRITQLPIQLEKYQLTAKGHGRDALGQVDIVVEYEGRRFHGVGLATDIIESSALAMVNSMNTIWRARQVGIELRRLHQHNNSQDMQETV.

One can recognise a Pyruvate carboxyltransferase domain in the interval 5–267 (VIIFDTTLRD…HTGIHHQEIY (263 aa)). Positions 14, 202, 204, and 238 each coordinate Mn(2+). The interval 392–525 (RLEYFSVQSS…NNSQDMQETV (134 aa)) is regulatory domain.

It belongs to the alpha-IPM synthase/homocitrate synthase family. LeuA type 1 subfamily. As to quaternary structure, homodimer. Mn(2+) is required as a cofactor.

The protein resides in the cytoplasm. The catalysed reaction is 3-methyl-2-oxobutanoate + acetyl-CoA + H2O = (2S)-2-isopropylmalate + CoA + H(+). It functions in the pathway amino-acid biosynthesis; L-leucine biosynthesis; L-leucine from 3-methyl-2-oxobutanoate: step 1/4. Catalyzes the condensation of the acetyl group of acetyl-CoA with 3-methyl-2-oxobutanoate (2-ketoisovalerate) to form 3-carboxy-3-hydroxy-4-methylpentanoate (2-isopropylmalate). In Sodalis glossinidius (strain morsitans), this protein is 2-isopropylmalate synthase.